The following is a 180-amino-acid chain: Adenine phosphoribosyltransferase (180 aa).

It belongs to the purine/pyrimidine phosphoribosyltransferase family. As to quaternary structure, homodimer.

It is found in the cytoplasm. The enzyme catalyses AMP + diphosphate = 5-phospho-alpha-D-ribose 1-diphosphate + adenine. The protein operates within purine metabolism; AMP biosynthesis via salvage pathway; AMP from adenine: step 1/1. Catalyzes a salvage reaction resulting in the formation of AMP, that is energically less costly than de novo synthesis. The sequence is that of Adenine phosphoribosyltransferase from Mycolicibacterium smegmatis (strain ATCC 700084 / mc(2)155) (Mycobacterium smegmatis).